The primary structure comprises 160 residues: UPF0178 protein PA5247 (160 aa).

The protein belongs to the UPF0178 family.

The protein is UPF0178 protein PA5247 of Pseudomonas aeruginosa (strain ATCC 15692 / DSM 22644 / CIP 104116 / JCM 14847 / LMG 12228 / 1C / PRS 101 / PAO1).